Reading from the N-terminus, the 120-residue chain is Probable non-functional immunoglobulin kappa variable 2D-24 (120 aa).

An N-terminal signal peptide occupies residues 1-19 (MRLLAQLLGLLMLWVPGSS). Positions 20 to 120 (GDIVMTQTPL…YYCTQATQFP (101 aa)) constitute an Ig-like domain. The segment at 21 to 43 (DIVMTQTPLSSPVTLGQPASISF) is framework-1. The segment at 44–59 (RSSQSLVHSDGNTYLS) is complementarity-determining-1. Residues 60-74 (WLQQRPGQPPRLLIY) form a framework-2 region. The interval 75-81 (KVSNRFS) is complementarity-determining-2. The interval 82 to 113 (GVPDRFSGSGAGTDFTLKISRVEAEDVGVYYC) is framework-3. Positions 114–120 (TQATQFP) are complementarity-determining-3.

As to quaternary structure, most probably, the immunoglobulin is not assembled due to incorrect folding of light chain. Immunoglobulins are composed of two identical heavy chains and two identical light chains; disulfide-linked.

The protein localises to the secreted. Its subcellular location is the cell membrane. Functionally, probable non-functional open reading frame (ORF) of V region of the variable domain of immunoglobulin light chains. Non-functional ORF generally cannot participate in the synthesis of a productive immunoglobulin chain due to altered V-(D)-J or switch recombination and/or splicing site (at mRNA level) and/or conserved amino acid change (protein level). Immunoglobulins, also known as antibodies, are membrane-bound or secreted glycoproteins produced by B lymphocytes. In the recognition phase of humoral immunity, the membrane-bound immunoglobulins serve as receptors which, upon binding of a specific antigen, trigger the clonal expansion and differentiation of B lymphocytes into immunoglobulins-secreting plasma cells. Secreted immunoglobulins mediate the effector phase of humoral immunity, which results in the elimination of bound antigens. The antigen binding site is formed by the variable domain of one heavy chain, together with that of its associated light chain. Thus, each immunoglobulin has two antigen binding sites with remarkable affinity for a particular antigen. The variable domains are assembled by a process called V-(D)-J rearrangement and can then be subjected to somatic hypermutations which, after exposure to antigen and selection, allow affinity maturation for a particular antigen. This is Probable non-functional immunoglobulin kappa variable 2D-24 from Homo sapiens (Human).